Here is a 372-residue protein sequence, read N- to C-terminus: DNA/RNA-binding protein ALBA4 (372 aa).

The protein belongs to the histone-like Alba family. As to quaternary structure, identified in a TARE6-associated complex consisting of over 30 proteins and including ALBA1, ALBA2 and ALBA4; the complex binds to the non-coding subtelomeric repeat region TARE6.

Its subcellular location is the nucleus. The protein localises to the chromosome. It localises to the telomere. It is found in the cytoplasm. Its function is as follows. Possesses DNA- and RNA-binding activities. Binds to DNA fragments longer than 14 base pairs with relaxed sequence specificity. Associates with the subtelomeric TARE6 repeats. Regulates the abundance of transcript sub-populations in a stage-specific manner. Regulates activation of male gametocytes. Participates in the coordination of sporozoite development in the oocyst. The sequence is that of DNA/RNA-binding protein ALBA4 from Plasmodium falciparum (isolate 3D7).